The chain runs to 209 residues: HTLV-1 basic zipper factor (209 aa).

Residues 48–162 (DGLLSLEEES…SARKEKMQEL (115 aa)) form a disordered region. Composition is skewed to basic and acidic residues over residues 70–87 (APPR…AEEK) and 94–114 (REKE…EEKA). The Nuclear localization signal 1 motif lies at 87–92 (KRKRKK). Short sequence motifs (nuclear localization signal) lie at residues 116-120 (RRRRA) and 137-141 (RRERK). Residues 122 to 160 (KKAADVARRKQEEQERRERKWRQGAEKAKQHSARKEKMQ) show a composition bias toward basic and acidic residues.

Belongs to the HTLV-1 HBZ protein family. Interacts with host ATF4; this interaction inhibits viral RNA transcriptional activation by preventing ATF4 binding to Tax-responsive elements. Interacts with host CREB1; this interaction inhibits host CREB1 transcriptional activity. Interacts with host JUN, JUNB and JUND. Interacts with host EP300.

Its subcellular location is the host nucleus. Contributes to the regulation of viral RNA transcription by interacting with host proteins involved in transcriptional activation such as ATF4, or CREB1, and by inhibiting their activity. Additionally, HBZ suppresses host NF-kappa-B-driven transcription mediated by host RELA as well as transcription of some classical NF-kappa-B target genes, including IL8, IL2RA, IRF4, VCAM1, and VEGFA. This is HTLV-1 basic zipper factor (HBZ) from Homo sapiens (Human).